The primary structure comprises 324 residues: Ig gamma-1 chain C region secreted form (324 aa).

The CH1 stretch occupies residues 1–97; it reads AKTTPPSVYP…ASSTKVDKKI (97 aa). A disulfide bridge connects residues Cys-27 and Cys-82. Residues 98 to 110 are hinge; it reads VPRDCGCKPCICT. Residues 111-217 are CH2; the sequence is VPEVSSVFIF…PIEKTISKTK (107 aa). 2 disulfides stabilise this stretch: Cys-138–Cys-198 and Cys-244–Cys-302. Asn-174 is a glycosylation site (N-linked (GlcNAc...) asparagine). Residues 218–324 are CH3; the sequence is GRPKAPQVYT…EKSLSHSPGK (107 aa).

The protein resides in the secreted. This is Ig gamma-1 chain C region secreted form (Ighg1) from Mus musculus (Mouse).